A 204-amino-acid polypeptide reads, in one-letter code: Proteasome subunit beta 1 (204 aa).

Positions 1–9 (MSYEYGTGA) are cleaved as a propeptide — removed in mature form; by autocatalysis. Catalysis depends on threonine 10, which acts as the Nucleophile.

Belongs to the peptidase T1B family. The 20S proteasome core is composed of 14 alpha and 14 beta subunits that assemble into four stacked heptameric rings, resulting in a barrel-shaped structure. The two inner rings, each composed of seven catalytic beta subunits, are sandwiched by two outer rings, each composed of seven alpha subunits. The catalytic chamber with the active sites is on the inside of the barrel. Has a gated structure, the ends of the cylinder being occluded by the N-termini of the alpha-subunits. Is capped at one or both ends by the proteasome regulatory ATPase, PAN.

It localises to the cytoplasm. It carries out the reaction Cleavage of peptide bonds with very broad specificity.. The formation of the proteasomal ATPase PAN-20S proteasome complex, via the docking of the C-termini of PAN into the intersubunit pockets in the alpha-rings, triggers opening of the gate for substrate entry. Interconversion between the open-gate and close-gate conformations leads to a dynamic regulation of the 20S proteasome proteolysis activity. Component of the proteasome core, a large protease complex with broad specificity involved in protein degradation. This Hyperthermus butylicus (strain DSM 5456 / JCM 9403 / PLM1-5) protein is Proteasome subunit beta 1.